The sequence spans 723 residues: F-box protein MAX2 homolog B (723 aa).

The F-box domain occupies 2-55; that stretch reads AKTPIPFTTLNDLPDVILSNIIAAVSDTRSRNATALVCHKWLVLERSTRTSLTL.

In terms of assembly, part of a putative SCF (SKP1/Cullin/F-box) ubiquitin ligase complex. Interacts with KAI2IA in the presence of (-)-germacrene D. Mainly expressed in fully expanded leaves, lateral roots, axillary and shoot apex, and, to a lower extent, in internodes and nodes.

The protein resides in the nucleus. It localises to the cytoplasm. Its function is as follows. Component of SCF(ASK-cullin-F-box) E3 ubiquitin ligase complexes, which may mediate the ubiquitination and subsequent proteasomal degradation of target proteins. Is necessary for responses to strigolactones and may be involved in the ubiquitin-mediated degradation of specific proteins that activate axillary growth. Targets probably SMAX1A to degradation upon the formation of an E3 SCF ubiquitin ligase complex (ASK-cullin-F-box) containing MAX2B and KAI2IA in response to (-)-germacrene D in the stigma. The polypeptide is F-box protein MAX2 homolog B (Petunia hybrida (Petunia)).